Here is a 405-residue protein sequence, read N- to C-terminus: Argininosuccinate synthase (405 aa).

An ATP-binding site is contributed by 12–20 (AYSGGLDTS). Residues Tyr-90 and Ser-95 each contribute to the L-citrulline site. Gly-120 is an ATP binding site. Residues Thr-122, Asn-126, and Asp-127 each coordinate L-aspartate. Asn-126 is an L-citrulline binding site. The L-citrulline site is built by Arg-130, Ser-179, Ser-188, Glu-265, and Tyr-277.

It belongs to the argininosuccinate synthase family. Type 1 subfamily. Homotetramer.

The protein resides in the cytoplasm. The enzyme catalyses L-citrulline + L-aspartate + ATP = 2-(N(omega)-L-arginino)succinate + AMP + diphosphate + H(+). The protein operates within amino-acid biosynthesis; L-arginine biosynthesis; L-arginine from L-ornithine and carbamoyl phosphate: step 2/3. This is Argininosuccinate synthase from Clostridium perfringens (strain 13 / Type A).